The following is an 89-amino-acid chain: Three-finger toxin 3 (89 aa).

An N-terminal signal peptide occupies residues 1-16 (MKTLLLILGVVAFVYL). 4 disulfide bridges follow: cysteine 24–cysteine 47, cysteine 40–cysteine 66, cysteine 70–cysteine 81, and cysteine 82–cysteine 87.

It belongs to the three-finger toxin family. Ancestral subfamily. As to expression, expressed by the venom gland.

It is found in the secreted. The protein is Three-finger toxin 3 of Sistrurus catenatus edwardsii (Desert massasauga).